A 202-amino-acid chain; its full sequence is Proteasome subunit beta 1 (202 aa).

Residue Met-1 is a propeptide, removed in mature form; by autocatalysis. Residue Thr-2 is the Nucleophile of the active site.

This sequence belongs to the peptidase T1B family. As to quaternary structure, the 20S proteasome core is composed of 14 alpha and 14 beta subunits that assemble into four stacked heptameric rings, resulting in a barrel-shaped structure. The two inner rings, each composed of seven catalytic beta subunits, are sandwiched by two outer rings, each composed of seven alpha subunits. The catalytic chamber with the active sites is on the inside of the barrel. Has a gated structure, the ends of the cylinder being occluded by the N-termini of the alpha-subunits. Is capped at one or both ends by the proteasome regulatory ATPase, PAN.

It localises to the cytoplasm. It catalyses the reaction Cleavage of peptide bonds with very broad specificity.. With respect to regulation, the formation of the proteasomal ATPase PAN-20S proteasome complex, via the docking of the C-termini of PAN into the intersubunit pockets in the alpha-rings, triggers opening of the gate for substrate entry. Interconversion between the open-gate and close-gate conformations leads to a dynamic regulation of the 20S proteasome proteolysis activity. Its function is as follows. Component of the proteasome core, a large protease complex with broad specificity involved in protein degradation. In Pyrobaculum arsenaticum (strain DSM 13514 / JCM 11321 / PZ6), this protein is Proteasome subunit beta 1.